The chain runs to 439 residues: GTPase Obg (439 aa).

Positions 1–159 (MAFVDQAEIE…RKLKLELKVL (159 aa)) constitute an Obg domain. The OBG-type G domain occupies 160–336 (ADVGLVGFPS…LMRLTADLLA (177 aa)). GTP is bound by residues 166 to 173 (GFPSAGKS), 191 to 195 (FTTLS), 213 to 216 (DLPG), 283 to 286 (TKMD), and 317 to 319 (SAL). Positions 173 and 193 each coordinate Mg(2+). Residues 358 to 439 (DFKPEQHNFT…NSDFVFEFSD (82 aa)) enclose the OCT domain.

The protein belongs to the TRAFAC class OBG-HflX-like GTPase superfamily. OBG GTPase family. Monomer. Mg(2+) is required as a cofactor.

The protein resides in the cytoplasm. An essential GTPase which binds GTP, GDP and possibly (p)ppGpp with moderate affinity, with high nucleotide exchange rates and a fairly low GTP hydrolysis rate. Plays a role in control of the cell cycle, stress response, ribosome biogenesis and in those bacteria that undergo differentiation, in morphogenesis control. The sequence is that of GTPase Obg from Leuconostoc citreum (strain KM20).